A 376-amino-acid chain; its full sequence is Salivary hyaluronidase (376 aa).

A signal peptide spans 1 to 16; sequence MNWIFHLFCAVYGIFC. Disulfide bonds link cysteine 32–cysteine 328 and cysteine 203–cysteine 217. Asparagine 36, asparagine 55, asparagine 77, and asparagine 88 each carry an N-linked (GlcNAc...) asparagine glycan. Glutamate 118 serves as the catalytic Proton donor. N-linked (GlcNAc...) asparagine glycosylation is found at asparagine 143, asparagine 153, asparagine 181, asparagine 214, asparagine 226, asparagine 248, asparagine 287, asparagine 321, asparagine 336, asparagine 356, and asparagine 371.

The protein belongs to the glycosyl hydrolase 56 family. Post-translationally, glycosylated; glycosylation is critical for enzymatic activity. Female salivary gland (at protein level).

Its subcellular location is the secreted. The enzyme catalyses Random hydrolysis of (1-&gt;4)-linkages between N-acetyl-beta-D-glucosamine and D-glucuronate residues in hyaluronate.. Its function is as follows. Hydrolyzes high molecular weight hyaluronic acid to produce small oligosaccharides. Up-regulates expression of CSF2, CSF3, LIF, CXCL1, CXCL2 and CXCL8 in cultured human dermal microvascular endothelial cells. Promotes host neutrophil recruitment at the injection site. In terms of biological role, (Microbial infection) Probably promotes Leishmania major infection in the host. In Lutzomyia longipalpis (Sand fly), this protein is Salivary hyaluronidase.